The primary structure comprises 650 residues: Threonine--tRNA ligase (650 aa).

The region spanning 3–65 is the TGS domain; that stretch reads DLVKVTLPDG…ERDARLEIVT (63 aa). The catalytic stretch occupies residues 248–548; that stretch reads DHRRLGPQLG…LVEHYAGAFP (301 aa). Zn(2+) contacts are provided by Cys-349, His-400, and His-525.

The protein belongs to the class-II aminoacyl-tRNA synthetase family. In terms of assembly, homodimer. Zn(2+) serves as cofactor.

Its subcellular location is the cytoplasm. The catalysed reaction is tRNA(Thr) + L-threonine + ATP = L-threonyl-tRNA(Thr) + AMP + diphosphate + H(+). Catalyzes the attachment of threonine to tRNA(Thr) in a two-step reaction: L-threonine is first activated by ATP to form Thr-AMP and then transferred to the acceptor end of tRNA(Thr). Also edits incorrectly charged L-seryl-tRNA(Thr). The sequence is that of Threonine--tRNA ligase from Anaeromyxobacter dehalogenans (strain 2CP-1 / ATCC BAA-258).